A 405-amino-acid polypeptide reads, in one-letter code: Putative colanic acid biosynthesis glycosyl transferase WcaC (405 aa).

It participates in slime biogenesis; slime polysaccharide biosynthesis. This chain is Putative colanic acid biosynthesis glycosyl transferase WcaC (wcaC), found in Escherichia coli (strain K12).